The primary structure comprises 121 residues: Splicing factor 3B subunit 6 (121 aa).

An interaction with pre-mRNA branch site region spans residues 12-25 (EVNRLLYVRNLPYK). The 76-residue stretch at 15-90 (RLLYVRNLPY…RYLVVLYYQS (76 aa)) folds into the RRM domain.

It belongs to the SF3B6 family. In terms of assembly, component of splicing factor SF3B complex. Component of the U11/U12 snRNPs that are part of the U12-type spliceosome.

Its subcellular location is the nucleus. Involved in pre-mRNA splicing as a component of the splicing factor SF3B complex. SF3B complex is required for 'A' complex assembly formed by the stable binding of U2 snRNP to the branchpoint sequence (BPS) in pre-mRNA. Directly contacts the pre-mRNA branch site adenosine for the first catalytic step of splicing. Enters the spliceosome and associates with the pre-mRNA branch site as part of the 17S U2 or, in the case of the minor spliceosome, as part of the 18S U11/U12 snRNP complex, and thus may facilitate the interaction of these snRNP with the branch sites of U2 and U12 respectively. The polypeptide is Splicing factor 3B subunit 6 (Drosophila melanogaster (Fruit fly)).